Consider the following 294-residue polypeptide: Indole-3-glycerol phosphate synthase (294 aa).

This sequence belongs to the TrpC family.

The catalysed reaction is 1-(2-carboxyphenylamino)-1-deoxy-D-ribulose 5-phosphate + H(+) = (1S,2R)-1-C-(indol-3-yl)glycerol 3-phosphate + CO2 + H2O. The protein operates within amino-acid biosynthesis; L-tryptophan biosynthesis; L-tryptophan from chorismate: step 4/5. The polypeptide is Indole-3-glycerol phosphate synthase (Crocosphaera subtropica (strain ATCC 51142 / BH68) (Cyanothece sp. (strain ATCC 51142))).